Consider the following 189-residue polypeptide: NAD(P)H-quinone oxidoreductase subunit 6, chloroplastic (189 aa).

5 consecutive transmembrane segments (helical) span residues 10-30, 32-52, 61-81, 98-118, and 144-164; these read LSLL…VLLP, ILYS…IYLL, AQVL…IMLV, GLSS…IFDT, and LLPF…AVFI.

This sequence belongs to the complex I subunit 6 family. In terms of assembly, NDH is composed of at least 16 different subunits, 5 of which are encoded in the nucleus.

It is found in the plastid. The protein resides in the chloroplast thylakoid membrane. It carries out the reaction a plastoquinone + NADH + (n+1) H(+)(in) = a plastoquinol + NAD(+) + n H(+)(out). The catalysed reaction is a plastoquinone + NADPH + (n+1) H(+)(in) = a plastoquinol + NADP(+) + n H(+)(out). Its function is as follows. NDH shuttles electrons from NAD(P)H:plastoquinone, via FMN and iron-sulfur (Fe-S) centers, to quinones in the photosynthetic chain and possibly in a chloroplast respiratory chain. The immediate electron acceptor for the enzyme in this species is believed to be plastoquinone. Couples the redox reaction to proton translocation, and thus conserves the redox energy in a proton gradient. This Mesostigma viride (Green alga) protein is NAD(P)H-quinone oxidoreductase subunit 6, chloroplastic (ndhG).